We begin with the raw amino-acid sequence, 422 residues long: L-threonine dehydratase biosynthetic IlvA (422 aa).

At Lys-56 the chain carries N6-(pyridoxal phosphate)lysine. Residues Asn-83, 189 to 193 (GGGGL), and Ser-315 each bind pyridoxal 5'-phosphate. The 75-residue stretch at 339-413 (HYFILNFPQR…FDPSNIYINE (75 aa)) folds into the ACT-like domain.

It belongs to the serine/threonine dehydratase family. In terms of assembly, homotetramer. Pyridoxal 5'-phosphate serves as cofactor.

The enzyme catalyses L-threonine = 2-oxobutanoate + NH4(+). Its pathway is amino-acid biosynthesis; L-isoleucine biosynthesis; 2-oxobutanoate from L-threonine: step 1/1. In terms of biological role, catalyzes the anaerobic formation of alpha-ketobutyrate and ammonia from threonine in a two-step reaction. The first step involved a dehydration of threonine and a production of enamine intermediates (aminocrotonate), which tautomerizes to its imine form (iminobutyrate). Both intermediates are unstable and short-lived. The second step is the nonenzymatic hydrolysis of the enamine/imine intermediates to form 2-ketobutyrate and free ammonia. In the low water environment of the cell, the second step is accelerated by RidA. The protein is L-threonine dehydratase biosynthetic IlvA (ilvA) of Staphylococcus aureus (strain NCTC 8325 / PS 47).